The sequence spans 238 residues: Chloride intracellular channel exl-1 (238 aa).

It belongs to the chloride channel CLIC family. Expressed in the intestine, neurons and muscles.

The protein resides in the cytoplasm. Its subcellular location is the membrane. It localises to the lysosome membrane. It is found in the golgi apparatus membrane. Probable chloride channel. The protein is Chloride intracellular channel exl-1 (exl-1) of Caenorhabditis elegans.